The chain runs to 254 residues: Short-chain dehydrogenase/reductase SDRA (254 aa).

Residue 15–39 (IVTASTQGIGFGITERFGLEGASVV) participates in NADP(+) binding. Ser146 contributes to the substrate binding site. Residue Tyr159 is the Proton acceptor of the active site. Residues 252-254 (SRL) carry the Microbody targeting signal motif.

The protein belongs to the short-chain dehydrogenases/reductases (SDR) family.

The protein localises to the peroxisome. Functionally, involved with IBR3 and IBR10 in the peroxisomal beta-oxidation of indole-3-butyric acid (IBA) to form indole-3-acetic acid (IAA), a biologically active auxin. May be responsible for catalyzing the dehydrogenation step in the conversion of IBA. May be involved in the peroxisomal activation of 2,4-dichlorophenoxybutyric acid (2,4-DB), a precursor of active auxins that inhibit root growth. The sequence is that of Short-chain dehydrogenase/reductase SDRA from Arabidopsis thaliana (Mouse-ear cress).